Reading from the N-terminus, the 302-residue chain is Recombination-associated protein RdgC (302 aa).

Belongs to the RdgC family.

The protein localises to the cytoplasm. It localises to the nucleoid. May be involved in recombination. The chain is Recombination-associated protein RdgC from Haemophilus influenzae (strain PittGG).